Reading from the N-terminus, the 752-residue chain is Multifunctional tryptophan biosynthesis protein (752 aa).

The region spanning 3–202 (FTLLIDNYDS…IQMKGGKWGG (200 aa)) is the Glutamine amidotransferase type-1 domain. Position 58–60 (58–60 (GPG)) interacts with L-glutamine. Cys-86 acts as the Nucleophile; for GATase activity in catalysis. L-glutamine is bound at residue 136 to 137 (SL). Catalysis depends on for GATase activity residues His-176 and Glu-178. The interval 231 to 495 (ILNRIHAQRL…DTKAFLRSLI (265 aa)) is indole-3-glycerol phosphate synthase. Positions 509–752 (LVKICGIRST…VEAFVKAVRG (244 aa)) are N-(5'-phosphoribosyl)anthranilate isomerase.

It catalyses the reaction N-(5-phospho-beta-D-ribosyl)anthranilate = 1-(2-carboxyphenylamino)-1-deoxy-D-ribulose 5-phosphate. It carries out the reaction 1-(2-carboxyphenylamino)-1-deoxy-D-ribulose 5-phosphate + H(+) = (1S,2R)-1-C-(indol-3-yl)glycerol 3-phosphate + CO2 + H2O. The enzyme catalyses chorismate + L-glutamine = anthranilate + pyruvate + L-glutamate + H(+). Its pathway is amino-acid biosynthesis; L-tryptophan biosynthesis; L-tryptophan from chorismate: step 1/5. It participates in amino-acid biosynthesis; L-tryptophan biosynthesis; L-tryptophan from chorismate: step 3/5. It functions in the pathway amino-acid biosynthesis; L-tryptophan biosynthesis; L-tryptophan from chorismate: step 4/5. Its function is as follows. Trifunctional enzyme bearing the Gln amidotransferase (GATase) domain of anthranilate synthase, indole-glycerolphosphate synthase, and phosphoribosylanthranilate isomerase activities. This is Multifunctional tryptophan biosynthesis protein (TRP1) from Cryptococcus neoformans var. neoformans serotype D (strain JEC21 / ATCC MYA-565) (Filobasidiella neoformans).